We begin with the raw amino-acid sequence, 256 residues long: MSLAVRVIPCLDVDAGRVVKGVHFENLRDAGDPVELAAEYYRQGADELTFLDVTASSSHRQTMVDVVSRTAEQIFIPLTVGGGVRTPEDVDSLLRCGADKVGVNTAAINDPTLISRVAERFGNQVLVLSVDARREQGERHTQSGFEVTTMGGRKSTGIDAIWWVKRAQELGAGEILLNSMDADGTQQGFDLEMIKAVRKEVKIPIIASGGAGKASDFPPAIEAGADAVLAASIFHYGKVTIGEVKDAIKAAGYTVR.

Active-site residues include D12 and D131.

It belongs to the HisA/HisF family. Heterodimer of HisH and HisF.

Its subcellular location is the cytoplasm. The catalysed reaction is 5-[(5-phospho-1-deoxy-D-ribulos-1-ylimino)methylamino]-1-(5-phospho-beta-D-ribosyl)imidazole-4-carboxamide + L-glutamine = D-erythro-1-(imidazol-4-yl)glycerol 3-phosphate + 5-amino-1-(5-phospho-beta-D-ribosyl)imidazole-4-carboxamide + L-glutamate + H(+). The protein operates within amino-acid biosynthesis; L-histidine biosynthesis; L-histidine from 5-phospho-alpha-D-ribose 1-diphosphate: step 5/9. In terms of biological role, IGPS catalyzes the conversion of PRFAR and glutamine to IGP, AICAR and glutamate. The HisF subunit catalyzes the cyclization activity that produces IGP and AICAR from PRFAR using the ammonia provided by the HisH subunit. This Bifidobacterium adolescentis (strain ATCC 15703 / DSM 20083 / NCTC 11814 / E194a) protein is Imidazole glycerol phosphate synthase subunit HisF.